Here is a 289-residue protein sequence, read N- to C-terminus: Protein charybde (289 aa).

The disordered stretch occupies residues 119–142 (TAHHPGHGHGPGPSPMPASPLQST).

This sequence belongs to the DDIT4 family.

It localises to the cytoplasm. Functionally, inhibits cell growth by regulating the Tor pathway upstream of the Tsc1-Tsc2 complex and downstream of Akt1. Acts as a cell death activator during head development. The sequence is that of Protein charybde (chrb) from Drosophila pseudoobscura pseudoobscura (Fruit fly).